Here is a 944-residue protein sequence, read N- to C-terminus: Protein unc-45 homolog A (944 aa).

Residues 1–25 (MTVSGPGTPEPRPSDPGASSAEELR) form a disordered region. TPR repeat units follow at residues 21–54 (AEEL…GATP), 58–91 (AILH…DGGD), and 92–125 (VKAL…EPKN). Lys70 carries the N6-acetyllysine modification. The residue at position 483 (Lys483) is an N6-acetyllysine.

Interacts with PGR isoforms A and B as well as with NR3C1 in the absence of ligand, and with HSP90AB1. Binding to HSP90AB1 involves 2 UNC45A monomers per HSP90AB1 dimer.

It localises to the cytoplasm. Its subcellular location is the perinuclear region. The protein resides in the nucleus. In terms of biological role, may act as co-chaperone for HSP90 (Potential). Prevents the stimulation of HSP90AB1 ATPase activity by AHSA1. Positive factor in promoting PGR function in the cell. May be necessary for proper folding of myosin (Potential). Necessary for normal cell proliferation. Necessary for normal myotube formation and myosin accumulation during muscle cell development. May play a role in erythropoiesis in stroma cells in the spleen. The chain is Protein unc-45 homolog A (Unc45a) from Rattus norvegicus (Rat).